We begin with the raw amino-acid sequence, 205 residues long: Myb-related protein 305 (205 aa).

2 HTH myb-type domains span residues Asp10–Leu62 and Arg63–Met117. 2 consecutive DNA-binding regions (H-T-H motif) follow at residues Trp38–Leu62 and Trp90–Ile113.

Expressed only in flowers.

The protein resides in the nucleus. In terms of biological role, transcription factor. In Antirrhinum majus (Garden snapdragon), this protein is Myb-related protein 305.